Consider the following 341-residue polypeptide: Phosphate acyltransferase (341 aa).

The protein belongs to the PlsX family. As to quaternary structure, homodimer. Probably interacts with PlsY.

Its subcellular location is the cytoplasm. It carries out the reaction a fatty acyl-[ACP] + phosphate = an acyl phosphate + holo-[ACP]. The protein operates within lipid metabolism; phospholipid metabolism. Catalyzes the reversible formation of acyl-phosphate (acyl-PO(4)) from acyl-[acyl-carrier-protein] (acyl-ACP). This enzyme utilizes acyl-ACP as fatty acyl donor, but not acyl-CoA. The protein is Phosphate acyltransferase of Aliivibrio fischeri (strain ATCC 700601 / ES114) (Vibrio fischeri).